A 404-amino-acid chain; its full sequence is Imidazolonepropionase (404 aa).

His73 and His75 together coordinate Fe(3+). 2 residues coordinate Zn(2+): His73 and His75. Positions 82, 145, and 178 each coordinate 4-imidazolone-5-propanoate. An N-formimidoyl-L-glutamate-binding site is contributed by Tyr145. Fe(3+) is bound at residue His243. Residue His243 participates in Zn(2+) binding. 4-imidazolone-5-propanoate is bound at residue Gln246. Fe(3+) is bound at residue Asp318. Asp318 provides a ligand contact to Zn(2+). Residues Asn320 and Gly322 each contribute to the N-formimidoyl-L-glutamate site. Residue Ser323 participates in 4-imidazolone-5-propanoate binding.

The protein belongs to the metallo-dependent hydrolases superfamily. HutI family. Zn(2+) serves as cofactor. Requires Fe(3+) as cofactor.

It localises to the cytoplasm. The enzyme catalyses 4-imidazolone-5-propanoate + H2O = N-formimidoyl-L-glutamate. Its pathway is amino-acid degradation; L-histidine degradation into L-glutamate; N-formimidoyl-L-glutamate from L-histidine: step 3/3. Catalyzes the hydrolytic cleavage of the carbon-nitrogen bond in imidazolone-5-propanoate to yield N-formimidoyl-L-glutamate. It is the third step in the universal histidine degradation pathway. The protein is Imidazolonepropionase of Bradyrhizobium sp. (strain BTAi1 / ATCC BAA-1182).